The following is an 83-amino-acid chain: Parvalbumin beta 3 (83 aa).

EF-hand domains lie at K13–G48 and L52–A83. The Ca(2+) site is built by D26, D28, S30, F32, E34, E37, D65, D67, D69, M71, and E76.

It belongs to the parvalbumin family.

In terms of biological role, in muscle, parvalbumin is thought to be involved in relaxation after contraction. It binds two calcium ions. The protein is Parvalbumin beta 3 of Macruronus novaezelandiae (Blue grenadier).